The chain runs to 364 residues: Protein Wnt-6 (364 aa).

The N-terminal stretch at 1-23 (MLPPVPSRLGLLLLLLCPAHVDG) is a signal peptide. 11 cysteine pairs are disulfide-bonded: C75-C86, C123-C131, C133-C171, C221-C235, C223-C230, C293-C324, C309-C319, C323-C363, C339-C354, C341-C351, and C346-C347. An N-linked (GlcNAc...) asparagine glycan is attached at N85. Residues 140–162 (APPRPSGLLGTPGPPGPTGSPDA) form a disordered region. Residue S227 is the site of O-palmitoleoyl serine; by PORCN attachment. N310 carries N-linked (GlcNAc...) asparagine glycosylation.

The protein belongs to the Wnt family. Interacts with PORCN. Post-translationally, palmitoleoylation is required for efficient binding to frizzled receptors. Depalmitoleoylation leads to Wnt signaling pathway inhibition. Detected in ileum, colon and stomach (at protein level).

The protein resides in the secreted. Its subcellular location is the extracellular space. It is found in the extracellular matrix. Functionally, ligand for members of the frizzled family of seven transmembrane receptors. Probable developmental protein. May be a signaling molecule which affects the development of discrete regions of tissues. Is likely to signal over only few cell diameters. In Mus musculus (Mouse), this protein is Protein Wnt-6 (Wnt6).